The chain runs to 487 residues: Cytochrome P450 monooxygenase pyvB (487 aa).

Residues 17-37 (PAYSSVVIGALVVCLVCLVWP) form a helical membrane-spanning segment. Residue C426 participates in heme binding.

This sequence belongs to the cytochrome P450 family. Requires heme as cofactor.

Its subcellular location is the membrane. It functions in the pathway secondary metabolite biosynthesis. Its function is as follows. Cytochrome P450 monooxygenase; part of the gene cluster that mediates the biosynthesis of pyranoviolin A, a pyranonigrin analog with a C-3 methoxy group. Initially, the PKS portion of pyvA synthesizes C-10 carbon chain from 5 molecules of malonyl-CoA, which is then condensed with the thiolation (T) domain-bound glycine activated by the adenylation (A) domain. The subsequent chain release by Dieckmann condensation (DKC) could be catalyzed by the TE domain present at the C-terminus of pyvA and/or the alpha/beta hydrolase pyvD, installing the tetramic acid moiety. The FAD-dependent monooxygenase pyvC next epoxidizes one of the olefins of the polyketide part, and the epoxide ring-opening induces the dihydro-gamma-pyrone ring formation. The cytochrome P450 monooxygeanse pyvB would be responsible for the 2 consecutive reactions, in which the dihydro-gamma-pyrone is oxidized to gamma-pyrone and C-7 is hydroxylated to yield pyranonigrin F. Finally, the O-methyltransferase pyvH methylates the C-3 hydroxy group to complete the biosynthesis. The polypeptide is Cytochrome P450 monooxygenase pyvB (Aspergillus violaceofuscus (strain CBS 115571)).